A 216-amino-acid polypeptide reads, in one-letter code: Thiopurine S-methyltransferase (216 aa).

The S-adenosyl-L-methionine site is built by Trp-10, Leu-45, Glu-66, and Arg-123.

This sequence belongs to the class I-like SAM-binding methyltransferase superfamily. TPMT family.

The protein localises to the cytoplasm. The enzyme catalyses S-adenosyl-L-methionine + a thiopurine = S-adenosyl-L-homocysteine + a thiopurine S-methylether.. The polypeptide is Thiopurine S-methyltransferase (Pseudomonas putida (strain ATCC 700007 / DSM 6899 / JCM 31910 / BCRC 17059 / LMG 24140 / F1)).